We begin with the raw amino-acid sequence, 383 residues long: Galactokinase (383 aa).

34–37 (EHTD) contributes to the substrate binding site. Residue 124–130 (GAGLSSS) participates in ATP binding. 2 residues coordinate Mg(2+): Ser130 and Glu162. The Proton acceptor role is filled by Asp174. Tyr223 lines the substrate pocket.

It belongs to the GHMP kinase family. GalK subfamily.

The protein resides in the cytoplasm. The catalysed reaction is alpha-D-galactose + ATP = alpha-D-galactose 1-phosphate + ADP + H(+). Its pathway is carbohydrate metabolism; galactose metabolism. In terms of biological role, catalyzes the transfer of the gamma-phosphate of ATP to D-galactose to form alpha-D-galactose-1-phosphate (Gal-1-P). The chain is Galactokinase from Serratia proteamaculans (strain 568).